We begin with the raw amino-acid sequence, 361 residues long: MRVTDFHFDLPDELIARYPTAERSASRLLYLNGNTGEYQDQQFNDLLEHIHSGDLLIFNNTRVIPARLYGRKASGGKLEVLVERVLDEHRCLAHIRSSKAPKENAEIFLGEDKLGEGNGFKAIMVARYDALFELKFEASQPLFDLLQQAGHMPLPPYIDRPDEDADQERYQTVYSKVLGAVAAPTAGLHFDHQMLQKLQEKGVQTAFVTLHVGAGTFQPVRVETIEEHKMHAEYAEVSQDVVDKILATKAQGKRVICVGTTSVRSIESAAQAAEKEGKLIAPFYSDTTIFLYPGKTFRIVDALVTNFHLPESTLIMLVSAFAGFKNCMNAYQHAVESQYRFFSYGDAMFITKNENALGDVP.

The protein belongs to the QueA family. As to quaternary structure, monomer.

The protein resides in the cytoplasm. The enzyme catalyses 7-aminomethyl-7-carbaguanosine(34) in tRNA + S-adenosyl-L-methionine = epoxyqueuosine(34) in tRNA + adenine + L-methionine + 2 H(+). It functions in the pathway tRNA modification; tRNA-queuosine biosynthesis. Its function is as follows. Transfers and isomerizes the ribose moiety from AdoMet to the 7-aminomethyl group of 7-deazaguanine (preQ1-tRNA) to give epoxyqueuosine (oQ-tRNA). This is S-adenosylmethionine:tRNA ribosyltransferase-isomerase from Glaesserella parasuis serovar 5 (strain SH0165) (Haemophilus parasuis).